The chain runs to 205 residues: Large ribosomal subunit protein uL3c (205 aa).

The interval 127-153 is disordered; it reads HFSRGPMSHGSKNHRQPGSIGAGTTPG.

The protein belongs to the universal ribosomal protein uL3 family. As to quaternary structure, part of the 50S ribosomal subunit.

It is found in the plastid. The protein resides in the chloroplast. In terms of biological role, one of the primary rRNA binding proteins, it binds directly near the 3'-end of the 23S rRNA, where it nucleates assembly of the 50S subunit. The polypeptide is Large ribosomal subunit protein uL3c (rpl3) (Porphyra purpurea (Red seaweed)).